Here is a 634-residue protein sequence, read N- to C-terminus: Chaperone protein HtpG (634 aa).

The segment at 1–342 (MTVASHKETL…SNDLPLNISR (342 aa)) is a; substrate-binding. The tract at residues 343-559 (EILQNNRVID…QHDMSGYLER (217 aa)) is b. The tract at residues 560–634 (LLKEAGQQAP…LNSLLLAMAD (75 aa)) is c.

This sequence belongs to the heat shock protein 90 family. Homodimer.

It is found in the cytoplasm. Its function is as follows. Molecular chaperone. Has ATPase activity. This Nitrosococcus oceani (strain ATCC 19707 / BCRC 17464 / JCM 30415 / NCIMB 11848 / C-107) protein is Chaperone protein HtpG.